The chain runs to 473 residues: Glycogen synthase (473 aa).

Lysine 15 lines the ADP-alpha-D-glucose pocket.

The protein belongs to the glycosyltransferase 1 family. Bacterial/plant glycogen synthase subfamily.

The enzyme catalyses [(1-&gt;4)-alpha-D-glucosyl](n) + ADP-alpha-D-glucose = [(1-&gt;4)-alpha-D-glucosyl](n+1) + ADP + H(+). It functions in the pathway glycan biosynthesis; glycogen biosynthesis. In terms of biological role, synthesizes alpha-1,4-glucan chains using ADP-glucose. The chain is Glycogen synthase from Flavobacterium johnsoniae (strain ATCC 17061 / DSM 2064 / JCM 8514 / BCRC 14874 / CCUG 350202 / NBRC 14942 / NCIMB 11054 / UW101) (Cytophaga johnsonae).